A 110-amino-acid polypeptide reads, in one-letter code: Cell cycle protein GpsB (110 aa).

Residues 32–73 (LDDVIKDYENYLEQIEKLQMENRRLQQALDKKESEASNVRNS) are a coiled coil.

Belongs to the GpsB family. Forms polymers through the coiled coil domains. Interacts with PBP1, MreC and EzrA.

It is found in the cytoplasm. Divisome component that associates with the complex late in its assembly, after the Z-ring is formed, and is dependent on DivIC and PBP2B for its recruitment to the divisome. Together with EzrA, is a key component of the system that regulates PBP1 localization during cell cycle progression. Its main role could be the removal of PBP1 from the cell pole after pole maturation is completed. Also contributes to the recruitment of PBP1 to the division complex. Not essential for septum formation. The chain is Cell cycle protein GpsB from Streptococcus agalactiae serotype Ia (strain ATCC 27591 / A909 / CDC SS700).